Consider the following 395-residue polypeptide: Acetate kinase (395 aa).

Asn7 contributes to the Mg(2+) binding site. Lys14 is a binding site for ATP. Arg85 is a binding site for substrate. Asp142 acts as the Proton donor/acceptor in catalysis. ATP is bound by residues 202–206 (HLGNG), 277–279 (DMR), and 325–329 (GIGEN). Glu378 provides a ligand contact to Mg(2+).

It belongs to the acetokinase family. In terms of assembly, homodimer. Mg(2+) serves as cofactor. Requires Mn(2+) as cofactor.

The protein resides in the cytoplasm. It catalyses the reaction acetate + ATP = acetyl phosphate + ADP. It functions in the pathway metabolic intermediate biosynthesis; acetyl-CoA biosynthesis; acetyl-CoA from acetate: step 1/2. Catalyzes the formation of acetyl phosphate from acetate and ATP. Can also catalyze the reverse reaction. The protein is Acetate kinase of Deinococcus geothermalis (strain DSM 11300 / CIP 105573 / AG-3a).